The primary structure comprises 144 residues: Granulocyte-macrophage colony-stimulating factor (144 aa).

The first 17 residues, 1–17, serve as a signal peptide directing secretion; that stretch reads MWLQNLLFLNTVVCSIS. Residues Ser22 and Ser24 are each glycosylated (O-linked (GalNAc...) serine). A glycan (O-linked (GalNAc...) threonine) is linked at Thr27. 3 N-linked (GlcNAc...) asparagine glycosylation sites follow: Asn44, Asn45, and Asn54. Cystine bridges form between Cys71/Cys113 and Cys105/Cys138.

The protein belongs to the GM-CSF family. Monomer. The signaling GM-CSF receptor complex is a dodecamer of two head-to-head hexamers of two alpha, two beta, and two ligand subunits.

Its subcellular location is the secreted. In terms of biological role, cytokine that stimulates the growth and differentiation of hematopoietic precursor cells from various lineages, including granulocytes, macrophages, eosinophils and erythrocytes. The protein is Granulocyte-macrophage colony-stimulating factor (CSF2) of Felis catus (Cat).